The chain runs to 119 residues: Small ribosomal subunit protein bS6 (119 aa).

This sequence belongs to the bacterial ribosomal protein bS6 family.

Binds together with bS18 to 16S ribosomal RNA. This chain is Small ribosomal subunit protein bS6, found in Buchnera aphidicola subsp. Baizongia pistaciae (strain Bp).